We begin with the raw amino-acid sequence, 117 residues long: Large ribosomal subunit protein uL22 (117 aa).

This sequence belongs to the universal ribosomal protein uL22 family. Part of the 50S ribosomal subunit.

Its function is as follows. This protein binds specifically to 23S rRNA; its binding is stimulated by other ribosomal proteins, e.g. L4, L17, and L20. It is important during the early stages of 50S assembly. It makes multiple contacts with different domains of the 23S rRNA in the assembled 50S subunit and ribosome. In terms of biological role, the globular domain of the protein is located near the polypeptide exit tunnel on the outside of the subunit, while an extended beta-hairpin is found that lines the wall of the exit tunnel in the center of the 70S ribosome. The protein is Large ribosomal subunit protein uL22 of Staphylococcus aureus (strain USA300).